A 443-amino-acid chain; its full sequence is tRNA modification GTPase MnmE (443 aa).

Positions 23, 82, and 121 each coordinate (6S)-5-formyl-5,6,7,8-tetrahydrofolate. The TrmE-type G domain occupies 215–364 (GTSIVLAGHP…LKQFIQQWMQ (150 aa)). Asn-225 lines the K(+) pocket. GTP contacts are provided by residues 225 to 230 (NAGKSS), 244 to 250 (TDIPGTT), and 269 to 272 (DSAG). Residue Ser-229 participates in Mg(2+) binding. 3 residues coordinate K(+): Thr-244, Ile-246, and Thr-249. Thr-250 lines the Mg(2+) pocket. Position 443 (Lys-443) interacts with (6S)-5-formyl-5,6,7,8-tetrahydrofolate.

This sequence belongs to the TRAFAC class TrmE-Era-EngA-EngB-Septin-like GTPase superfamily. TrmE GTPase family. In terms of assembly, homodimer. Heterotetramer of two MnmE and two MnmG subunits. K(+) serves as cofactor.

The protein localises to the cytoplasm. Functionally, exhibits a very high intrinsic GTPase hydrolysis rate. Involved in the addition of a carboxymethylaminomethyl (cmnm) group at the wobble position (U34) of certain tRNAs, forming tRNA-cmnm(5)s(2)U34. This chain is tRNA modification GTPase MnmE, found in Chlamydia abortus (strain DSM 27085 / S26/3) (Chlamydophila abortus).